The following is a 230-amino-acid chain: Large ribosomal subunit protein uL3 (230 aa).

Disordered regions lie at residues 125-149 and 210-230; these read QAIG…SLGD and PNPK…VKNE.

Belongs to the universal ribosomal protein uL3 family. As to quaternary structure, part of the 50S ribosomal subunit. Forms a cluster with proteins L14 and L19.

Its function is as follows. One of the primary rRNA binding proteins, it binds directly near the 3'-end of the 23S rRNA, where it nucleates assembly of the 50S subunit. The sequence is that of Large ribosomal subunit protein uL3 from Mesomycoplasma hyopneumoniae (strain J / ATCC 25934 / NCTC 10110) (Mycoplasma hyopneumoniae).